Here is a 238-residue protein sequence, read N- to C-terminus: MRFDGRGAESLREVKITRNYLKHAEGSVLIEFGDTKVICTASVEGSVPPFLRGKGTGWVTAEYSMLPRATHTRSHRESSKGKVGGRTHEIQRLIGRSLRAVMDMNLLGERSVLIDCDVIQADGGTRTASITGAYVALYDALDGLVKKGELAAMPLKEAVAAVSVGIVDGTPLLDLNYVEDSSAEVDMNFVMTSSNRFVEVQGTAEAEPFTVEQMDAMRDLAISGIKRLFQIQKEALCQ.

Residues R86 and 124-126 each bind phosphate; that span reads GTR.

Belongs to the RNase PH family. In terms of assembly, homohexameric ring arranged as a trimer of dimers.

It carries out the reaction tRNA(n+1) + phosphate = tRNA(n) + a ribonucleoside 5'-diphosphate. Its function is as follows. Phosphorolytic 3'-5' exoribonuclease that plays an important role in tRNA 3'-end maturation. Removes nucleotide residues following the 3'-CCA terminus of tRNAs; can also add nucleotides to the ends of RNA molecules by using nucleoside diphosphates as substrates, but this may not be physiologically important. Probably plays a role in initiation of 16S rRNA degradation (leading to ribosome degradation) during starvation. This Geotalea uraniireducens (strain Rf4) (Geobacter uraniireducens) protein is Ribonuclease PH.